The sequence spans 76 residues: Small ribosomal subunit protein bS21C (76 aa).

Residues 52-76 (GRQRKLARKQMQREGLLPTKPRKDK) are disordered.

It belongs to the bacterial ribosomal protein bS21 family.

This chain is Small ribosomal subunit protein bS21C (rpsU3), found in Agrobacterium fabrum (strain C58 / ATCC 33970) (Agrobacterium tumefaciens (strain C58)).